A 291-amino-acid polypeptide reads, in one-letter code: Glycine--tRNA ligase alpha subunit (291 aa).

Belongs to the class-II aminoacyl-tRNA synthetase family. As to quaternary structure, tetramer of two alpha and two beta subunits.

Its subcellular location is the cytoplasm. It catalyses the reaction tRNA(Gly) + glycine + ATP = glycyl-tRNA(Gly) + AMP + diphosphate. The polypeptide is Glycine--tRNA ligase alpha subunit (Geobacter metallireducens (strain ATCC 53774 / DSM 7210 / GS-15)).